A 221-amino-acid chain; its full sequence is Ribosomal RNA large subunit methyltransferase E (221 aa).

Residues G60, W62, D89, D105, and D134 each coordinate S-adenosyl-L-methionine. The Proton acceptor role is filled by K174. Positions 199–221 (KPKASRDKSSETFLLGRQLKHPG) are disordered.

The protein belongs to the class I-like SAM-binding methyltransferase superfamily. RNA methyltransferase RlmE family.

It is found in the cytoplasm. It carries out the reaction uridine(2552) in 23S rRNA + S-adenosyl-L-methionine = 2'-O-methyluridine(2552) in 23S rRNA + S-adenosyl-L-homocysteine + H(+). Its function is as follows. Specifically methylates the uridine in position 2552 of 23S rRNA at the 2'-O position of the ribose in the fully assembled 50S ribosomal subunit. This Ralstonia pickettii (strain 12J) protein is Ribosomal RNA large subunit methyltransferase E.